The following is a 337-amino-acid chain: Na(+)/H(+) exchange regulatory cofactor NHE-RF2 (337 aa).

The PDZ 1 domain occupies 11–91 (LCRLVRGEQG…QTQLLVVDKE (81 aa)). A disordered region spans residues 112 to 145 (LPPAHNPWEPKPDWACSGSLGSDTGQKDVNGPPR). Residues serine 130, serine 183, serine 186, serine 254, serine 269, serine 280, and serine 303 each carry the phosphoserine modification. Residues 151–231 (LCHLRRGPQG…EARLLVVDPE (81 aa)) form the PDZ 2 domain. Residues 242–337 (VPTEEHVEGP…NRKREIFSNF (96 aa)) are disordered. Polar residues predominate over residues 255–275 (PVTNGTSPAQLNGGSVCSSRS). Over residues 327 to 337 (WNRKREIFSNF) the composition is skewed to basic and acidic residues.

As to quaternary structure, homodimer, and heterodimer with NHERF1. Binds PDZK1. Interacts with SRY. Binds ADRB2, SLC9A3, P2RY1, P2YR2, RDX and LPAR2. Interacts with MCC. Found in a complex with EZR, PODXL and NHERF2. Interacts (via the PDZ domains) with PODXL (via the C-terminal PDZ-binding motif DTHL); interaction is detected in glomerular epithelium cells. Interacts with SGK1 and KCNJ1/ROMK1. Interacts (via the PDZ domains) with SLC26A6.

Its subcellular location is the endomembrane system. The protein resides in the nucleus. The protein localises to the apical cell membrane. Its function is as follows. Scaffold protein that connects plasma membrane proteins with members of the ezrin/moesin/radixin family and thereby helps to link them to the actin cytoskeleton and to regulate their surface expression. Necessary for cAMP-mediated phosphorylation and inhibition of SLC9A3. May also act as scaffold protein in the nucleus. The chain is Na(+)/H(+) exchange regulatory cofactor NHE-RF2 (Nherf2) from Mus musculus (Mouse).